Consider the following 241-residue polypeptide: Large ribosomal subunit protein uL3 (241 aa).

Disordered regions lie at residues 140–168 and 216–241; these read SHRS…HMGD and APKP…EEGA. At glutamine 151 the chain carries N5-methylglutamine.

The protein belongs to the universal ribosomal protein uL3 family. Part of the 50S ribosomal subunit. Forms a cluster with proteins L14 and L19. Post-translationally, methylated by PrmB.

In terms of biological role, one of the primary rRNA binding proteins, it binds directly near the 3'-end of the 23S rRNA, where it nucleates assembly of the 50S subunit. This is Large ribosomal subunit protein uL3 from Xanthobacter autotrophicus (strain ATCC BAA-1158 / Py2).